The primary structure comprises 346 residues: Lipase chaperone (346 aa).

The helical transmembrane segment at T10–F30 threads the bilayer.

The protein belongs to the lipase chaperone family.

It is found in the cell inner membrane. In terms of biological role, may be involved in the folding of the extracellular lipase during its passage through the periplasm. This Acinetobacter venetianus (strain ATCC 31012 / DSM 23050 / BCRC 14357 / CCUG 45561 / CIP 110063 / KCTC 2702 / LMG 19082 / RAG-1) protein is Lipase chaperone (lifO).